Reading from the N-terminus, the 358-residue chain is Golgi-resident adenosine 3',5'-bisphosphate 3'-phosphatase (358 aa).

Met1 bears the N-acetylmethionine mark. The Cytoplasmic portion of the chain corresponds to 1 to 12 (MAPMGIRLSPLG). Residues 13–33 (VAVFCLLGLGVLYHLYSGFLA) form a helical membrane-spanning segment. Residues 34 to 358 (GRFSLFGLGG…KLPDLEKMGH (325 aa)) are Lumenal-facing. The segment at 85-106 (RESNVLHEKSKGKTREGADDKM) is disordered. Asp110 functions as the Proton acceptor in the catalytic mechanism. Mg(2+)-binding residues include Glu133, Asp174, Leu176, and Asp177. The Proton acceptor role is filled by Thr179. Positions 242 and 245 each coordinate AMP. The N-linked (GlcNAc...) asparagine glycan is linked to Asn259. Positions 268 and 272 each coordinate AMP. Asp300 contributes to the Mg(2+) binding site.

It belongs to the inositol monophosphatase superfamily. The cofactor is Mg(2+). Post-translationally, contains N-linked glycan resistant to endoglycosydase H.

It localises to the golgi apparatus. Its subcellular location is the trans-Golgi network membrane. It carries out the reaction adenosine 3',5'-bisphosphate + H2O = AMP + phosphate. It functions in the pathway sulfur metabolism. Its activity is regulated as follows. Strongly inhibited by lithium. Exhibits 3'-nucleotidase activity toward adenosine 3',5'-bisphosphate (PAP), namely hydrolyzes adenosine 3',5'-bisphosphate into adenosine 5'-monophosphate (AMP) and a phosphate. May play a role in the formation of skeletal elements derived through endochondral ossification, possibly by clearing adenosine 3',5'-bisphosphate produced by Golgi sulfotransferases during glycosaminoglycan sulfation. Has no activity toward 3'-phosphoadenosine 5'-phosphosulfate (PAPS) or inositol phosphate (IP) substrates including I(1)P, I(1,4)P2, I(1,3,4)P3, I(1,4,5)P3 and I(1,3,4,5)P4. This is Golgi-resident adenosine 3',5'-bisphosphate 3'-phosphatase (BPNT2) from Callithrix jacchus (White-tufted-ear marmoset).